The primary structure comprises 83 residues: MSNKGQLLQDPFLNALRREHVPVSIYLVNGIKLQGQIESFDQYVVLLRNTVTQMVYKHAISTIVPGRAVNFSTAEAAGSDASA.

Residues 10-69 (DPFLNALRREHVPVSIYLVNGIKLQGQIESFDQYVVLLRNTVTQMVYKHAISTIVPGRAV) form the Sm domain.

The protein belongs to the Hfq family. In terms of assembly, homohexamer.

Its function is as follows. RNA chaperone that binds small regulatory RNA (sRNAs) and mRNAs to facilitate mRNA translational regulation in response to envelope stress, environmental stress and changes in metabolite concentrations. Also binds with high specificity to tRNAs. The polypeptide is RNA-binding protein Hfq (Delftia acidovorans (strain DSM 14801 / SPH-1)).